The following is a 247-amino-acid chain: MEQLFVDDPAFASSMSSLEADIFSGAGQLPSSPWLDLDLDDDVQDLSMAPTTANAVSSGYGSGGSGSHRKLSHNAYERDRRKQLNELYSSLRALLPDADHTKLSIPTTVSRVLKYIPELQKQVENLERKKKELTTTSTTNCKPGVLGSQLMSEGMAPIVSATCINDMEIMVQVSLLSNVAGSVLPLSKCIKVLENEGLHFISSSTSSGFGNRTFYSIHLQRSEGTINEECPAFCERLEKVVRNKAKL.

The Nuclear localization signal motif lies at 68 to 75 (HRKLSHNA). The interval 68–81 (HRKLSHNAYERDRR) is basic motif. A bHLH domain is found at 68–119 (HRKLSHNAYERDRRKQLNELYSSLRALLPDADHTKLSIPTTVSRVLKYIPEL). The helix-loop-helix motif stretch occupies residues 82 to 119 (KQLNELYSSLRALLPDADHTKLSIPTTVSRVLKYIPEL).

It belongs to the bHLH protein family. As to quaternary structure, forms homodimers. Interacts with BHLH156 in the nucleus. As to expression, expressed constitutively at low levels in the roots. Also observed in flowers, developing seeds, embryos and vascular bundles.

It localises to the nucleus. It is found in the cytoplasm. In terms of biological role, transcription activator that binds to the DNA motif 5'-CACGTGG-3' in the promoter of iron (Fe) deficiency-inducible genes as well as of genes involved in iron homeostasis, thus contributing to basal tolerance to iron deficiency, iron uptake from soil and iron transport, particularly during seed maturation and germination. Promotes the accumulation of mugineic acid family phytosiderophores (MAs). Required for ethylene-mediated signaling during iron deficiency responses. Improves growth and yield, especially in calcareous soil with low iron availability. Promotes iron concentration in shoots and grain. This chain is Protein IRON-RELATED TRANSCRIPTION FACTOR 2, found in Oryza sativa subsp. japonica (Rice).